We begin with the raw amino-acid sequence, 482 residues long: Probable cytosol aminopeptidase (482 aa).

Lys-251 and Asp-256 together coordinate Mn(2+). Residue Lys-263 is part of the active site. The Mn(2+) site is built by Asp-274, Asp-333, and Glu-335. Arg-337 is an active-site residue.

Belongs to the peptidase M17 family. The cofactor is Mn(2+).

Its subcellular location is the cytoplasm. It carries out the reaction Release of an N-terminal amino acid, Xaa-|-Yaa-, in which Xaa is preferably Leu, but may be other amino acids including Pro although not Arg or Lys, and Yaa may be Pro. Amino acid amides and methyl esters are also readily hydrolyzed, but rates on arylamides are exceedingly low.. The catalysed reaction is Release of an N-terminal amino acid, preferentially leucine, but not glutamic or aspartic acids.. Functionally, presumably involved in the processing and regular turnover of intracellular proteins. Catalyzes the removal of unsubstituted N-terminal amino acids from various peptides. This chain is Probable cytosol aminopeptidase, found in Acinetobacter baumannii (strain SDF).